The primary structure comprises 255 residues: 5'-nucleotidase SurE (255 aa).

A divalent metal cation contacts are provided by Asp8, Asp9, Ser39, and Asn95.

This sequence belongs to the SurE nucleotidase family. Requires a divalent metal cation as cofactor.

The protein resides in the cytoplasm. The enzyme catalyses a ribonucleoside 5'-phosphate + H2O = a ribonucleoside + phosphate. Nucleotidase that shows phosphatase activity on nucleoside 5'-monophosphates. This chain is 5'-nucleotidase SurE, found in Herpetosiphon aurantiacus (strain ATCC 23779 / DSM 785 / 114-95).